A 558-amino-acid polypeptide reads, in one-letter code: Autophagy-related protein 18 (558 aa).

The WD 1 repeat unit spans residues 4-42 (DYPPTINFINFNQTGSCISIATDDGFSIYNCDPFGKFYS). The interval 176 to 264 (SSSSSQVEPP…FQQTGITGSS (89 aa)) is disordered. Residues 188-201 (PQQRSNFSGNTLET) show a composition bias toward polar residues. Residues 210–252 (GSNNSNNGNNNNNNNNNNNNNNNNNNNNNNNNNNSNNEENSNS) show a composition bias toward low complexity. Over residues 253–264 (KSFQQTGITGSS) the composition is skewed to polar residues. WD repeat units lie at residues 290–330 (AHKG…KIYQ) and 335–374 (TYPT…ETSS). The short motif at 331–335 (FRRGT) is the L/FRRG motif element. Residues 400 to 432 (SSESLTESQSKDPHVDTSRSTVGRMIRKSSQQL) form a disordered region.

The protein belongs to the WD repeat PROPPIN family. In terms of assembly, component of the PI(3,5)P2 regulatory complex.

It localises to the preautophagosomal structure membrane. It is found in the vacuole membrane. Its subcellular location is the endosome membrane. The PI(3,5)P2 regulatory complex regulates both the synthesis and turnover of phosphatidylinositol 3,5-bisphosphate (PtdIns(3,5)P2). Necessary for proper vacuole morphology. Plays an important role in osmotically-induced vacuole fragmentation. Required for cytoplasm to vacuole transport (Cvt) vesicle formation, pexophagy and starvation-induced autophagy. Involved in correct ATG9 trafficking to the pre-autophagosomal structure. Might also be involved in premeiotic DNA replication. In Vanderwaltozyma polyspora (strain ATCC 22028 / DSM 70294 / BCRC 21397 / CBS 2163 / NBRC 10782 / NRRL Y-8283 / UCD 57-17) (Kluyveromyces polysporus), this protein is Autophagy-related protein 18 (ATG18).